The chain runs to 692 residues: DNA-binding protein RFX2 (692 aa).

The interval 1-26 is disordered; the sequence is MQNSEGGADSPATVALRPAAQPVPAS. A Phosphoserine modification is found at Ser26. Positions 169–244 form a DNA-binding region, RFX-type winged-helix; it reads TLQWLLDNYE…YHYYGIRLKP (76 aa). The segment at 261–296 is disordered; sequence RQQPTHQKPRYRPAQKSDSLGDGSAHSNMHSTPEQA. The span at 285–294 shows a compositional bias: polar residues; that stretch reads AHSNMHSTPE. Residue Ser386 is modified to Phosphoserine. Residues 660 to 685 show a composition bias toward basic and acidic residues; the sequence is DGHSSEADVDGRSLGEPLVKRERSDP. The tract at residues 660–692 is disordered; that stretch reads DGHSSEADVDGRSLGEPLVKRERSDPSHPLQGI.

It belongs to the RFX family. In terms of assembly, homodimer; probably only forms homodimers in testis. Heterodimer; heterodimerizes with RFX1 and RFX3. Expressed at highest level in testis. Expressed at lower level in thymus. Also expressed in stomach, kidney, liver, brain and heart. Weakly expressed in spleen and lung. Within testis, most abundantly present in spermatocytes: present from pachytene spermatocytes to early spermatids (at protein level). Also present in non-germinal tissues.

It is found in the nucleus. Its subcellular location is the cytoplasm. In terms of biological role, transcription factor that acts as a key regulator of spermatogenesis. Acts by regulating expression of genes required for the haploid phase during spermiogenesis, such as genes required for cilium assembly and function. Recognizes and binds the X-box, a regulatory motif with DNA sequence 5'-GTNRCC(0-3N)RGYAAC-3' present on promoters. Probably activates transcription of the testis-specific histone gene H1-6. This is DNA-binding protein RFX2 (Rfx2) from Rattus norvegicus (Rat).